Consider the following 613-residue polypeptide: Ribosome-associated molecular chaperone SSB (613 aa).

The interval 1–391 is nucleotide binding domain (NBD); the sequence is MADGVFQGAI…ILTGQSTSDE (391 aa). Residues 16–18, K73, 205–207, 271–278, and G342 each bind ATP; these read TTY, GGT, and ERAKRTLS. The interval 392-402 is inter-domain linker; the sequence is TKDLLLLDVAP. A substrate binding domain (SBD) region spans residues 403–613; the sequence is LSLGVGMQGD…RVVTKAMSSR (211 aa). Positions 516–612 are lid domain (SBDalpha); that stretch reads SEDIEKMVNQ…KRVVTKAMSS (97 aa). The short motif at 574 to 582 is the Nuclear export signal element; sequence IEAALADAL.

Belongs to the heat shock protein 70 family. Ssb-type Hsp70 subfamily. In terms of assembly, binds to ribosomes. Binds close to the ribosomal tunnel exit via contacts with both ribosomal proteins and rRNA. Directly interacts with nascent polypeptides. This interaction is dependent on the ribosome-associated complex (RAC). Interacts with SSE1. Interacts with FES1.

Its subcellular location is the cytoplasm. It carries out the reaction ATP + H2O = ADP + phosphate + H(+). Functionally, ribosome-bound, Hsp70-type chaperone that assists in the cotranslational folding of newly synthesized proteins in the cytosol. Stimulates folding by interacting with nascent chains, binding to short, largely hydrophobic sequences exposed by unfolded proteins, thereby stabilizing longer, more slowly translated, and aggregation-prone nascent polypeptides and domains that cannot fold stably until fully synthesized. The Hsp70-protein substrate interaction depends on ATP-binding and on allosteric regulation between the NBD and the SBD. The ATP-bound state is characterized by a fast exchange rate of substrate (low affinity state), while in the ADP-bound state exchange is much slower (high affinity state). During the Hsp70 cycle, the chaperone switches between the ATP-bound state (open conformation) and the ADP-bound state (closed conformation) by major conformational rearrangements involving mainly the lid domain. Ssb cooperates with a specific Hsp40/Hsp70 co-chaperone termed the ribosome-associated complex (RAC), which stimulates the ATPase activity of the ribosome-associated pool of Ssbs and switches it to the high affinity substrate binding state. Hsp110 chaperone SSE1 and FES1 act as nucleotide exchange factors that cause substrate release. This Candida glabrata (strain ATCC 2001 / BCRC 20586 / JCM 3761 / NBRC 0622 / NRRL Y-65 / CBS 138) (Yeast) protein is Ribosome-associated molecular chaperone SSB (SSB1).